Consider the following 298-residue polypeptide: N-acetylmuramic acid 6-phosphate etherase (298 aa).

Residues 55-218 (AANRYKKGGR…STGVMIRQGK (164 aa)) enclose the SIS domain. Glu83 acts as the Proton donor in catalysis. Residue Glu114 is part of the active site.

The protein belongs to the GCKR-like family. MurNAc-6-P etherase subfamily. Homodimer.

It catalyses the reaction N-acetyl-D-muramate 6-phosphate + H2O = N-acetyl-D-glucosamine 6-phosphate + (R)-lactate. It functions in the pathway amino-sugar metabolism; N-acetylmuramate degradation. In terms of biological role, specifically catalyzes the cleavage of the D-lactyl ether substituent of MurNAc 6-phosphate, producing GlcNAc 6-phosphate and D-lactate. The sequence is that of N-acetylmuramic acid 6-phosphate etherase from Lactobacillus acidophilus (strain ATCC 700396 / NCK56 / N2 / NCFM).